The sequence spans 749 residues: Ribosome-releasing factor 2, mitochondrial (749 aa).

The transit peptide at 1-22 (MLLLLCNRSVVPRGIRRILRTA) directs the protein to the mitochondrion. Residues 44–322 (KNIRNIGILA…AVLKYLPAPN (279 aa)) enclose the tr-type G domain. Residues 53 to 60 (AHIDGGKT), 117 to 121 (DTPGH), and 171 to 174 (NKMD) contribute to the GTP site.

This sequence belongs to the TRAFAC class translation factor GTPase superfamily. Classic translation factor GTPase family. EF-G/EF-2 subfamily.

The protein resides in the mitochondrion. Mitochondrial GTPase that mediates the disassembly of ribosomes from messenger RNA at the termination of mitochondrial protein biosynthesis. Not involved in the GTP-dependent ribosomal translocation step during translation elongation. The protein is Ribosome-releasing factor 2, mitochondrial of Culex quinquefasciatus (Southern house mosquito).